Consider the following 178-residue polypeptide: N-alpha-acetyltransferase 80 (178 aa).

The region spanning 26 to 178 (VPIHNYPELM…AKKKYMKKVL (153 aa)) is the N-acetyltransferase domain. Residues Arg-48, 53–56 (RMRS), Asn-88, and Ser-98 contribute to the substrate site. Acetyl-CoA contacts are provided by residues 99-101 (VVV) and 107-112 (GQGFGK). Ser-134 is a substrate binding site. Residue Gln-138 participates in acetyl-CoA binding.

Belongs to the acetyltransferase family.

The catalysed reaction is N-terminal L-aspartyl-L-aspartyl-L-aspartyl-[protein] + acetyl-CoA = N-terminal N-acetyl-L-aspartyl-L-aspartyl-L-aspartyl-[protein] + CoA + H(+). The enzyme catalyses N-terminal L-glutamyl-L-glutamyl-L-glutamyl-[protein] + acetyl-CoA = N-terminal N-acetyl-L-glutamyl-L-glutamyl-L-glutamyl-[protein] + CoA + H(+). N-alpha-acetyltransferase that acetylates the amino terminal acidic residue of proteins devoid of initiator methionine. Preferentially acts on proteins starting with Asp-Asp-Asp and Glu-Glu-Glu sequences. In vitro, shows high activity towards N-terminal sequences starting with Met-Asp-Glu-Leu, Met-Glu-Glu-Glu and Met-Asp-Asp-Asp. The sequence is that of N-alpha-acetyltransferase 80 from Drosophila melanogaster (Fruit fly).